The following is an 862-amino-acid chain: Probable glutaminase ARB_05535/05536 (862 aa).

The N-terminal stretch at 1-19 is a signal peptide; that stretch reads MLSWVLLAWAVACSALAGA. N-linked (GlcNAc...) asparagine glycosylation is found at asparagine 106, asparagine 273, asparagine 436, asparagine 448, asparagine 486, asparagine 610, and asparagine 744. The tract at residues 798–862 is disordered; sequence FLDDKDNNSP…SQMTIVNEND (65 aa). Over residues 853–862 the composition is skewed to polar residues; that stretch reads SQMTIVNEND.

This sequence belongs to the fungal glutaminase gtaA family.

It is found in the secreted. The enzyme catalyses L-glutamine + H2O = L-glutamate + NH4(+). Its function is as follows. Glutaminase catalyzes the hydrolysis of glutamine to glutamic acid and plays a key role in nitrogen metabolism. The chain is Probable glutaminase ARB_05535/05536 from Arthroderma benhamiae (strain ATCC MYA-4681 / CBS 112371) (Trichophyton mentagrophytes).